The primary structure comprises 273 residues: 4-hydroxy-3-methylbut-2-enyl diphosphate reductase (273 aa).

Cys12 is a binding site for [4Fe-4S] cluster. Residues His36 and His70 each coordinate (2E)-4-hydroxy-3-methylbut-2-enyl diphosphate. Dimethylallyl diphosphate is bound by residues His36 and His70. His36 and His70 together coordinate isopentenyl diphosphate. Cys92 contributes to the [4Fe-4S] cluster binding site. His120 contacts (2E)-4-hydroxy-3-methylbut-2-enyl diphosphate. His120 serves as a coordination point for dimethylallyl diphosphate. An isopentenyl diphosphate-binding site is contributed by His120. The active-site Proton donor is the Glu122. (2E)-4-hydroxy-3-methylbut-2-enyl diphosphate is bound at residue Thr157. Residue Cys185 coordinates [4Fe-4S] cluster. Ser213, Ser214, Asn215, and Ser257 together coordinate (2E)-4-hydroxy-3-methylbut-2-enyl diphosphate. Dimethylallyl diphosphate is bound by residues Ser213, Ser214, Asn215, and Ser257. Isopentenyl diphosphate-binding residues include Ser213, Ser214, Asn215, and Ser257.

The protein belongs to the IspH family. It depends on [4Fe-4S] cluster as a cofactor.

The catalysed reaction is isopentenyl diphosphate + 2 oxidized [2Fe-2S]-[ferredoxin] + H2O = (2E)-4-hydroxy-3-methylbut-2-enyl diphosphate + 2 reduced [2Fe-2S]-[ferredoxin] + 2 H(+). The enzyme catalyses dimethylallyl diphosphate + 2 oxidized [2Fe-2S]-[ferredoxin] + H2O = (2E)-4-hydroxy-3-methylbut-2-enyl diphosphate + 2 reduced [2Fe-2S]-[ferredoxin] + 2 H(+). The protein operates within isoprenoid biosynthesis; dimethylallyl diphosphate biosynthesis; dimethylallyl diphosphate from (2E)-4-hydroxy-3-methylbutenyl diphosphate: step 1/1. It functions in the pathway isoprenoid biosynthesis; isopentenyl diphosphate biosynthesis via DXP pathway; isopentenyl diphosphate from 1-deoxy-D-xylulose 5-phosphate: step 6/6. Functionally, catalyzes the conversion of 1-hydroxy-2-methyl-2-(E)-butenyl 4-diphosphate (HMBPP) into a mixture of isopentenyl diphosphate (IPP) and dimethylallyl diphosphate (DMAPP). Acts in the terminal step of the DOXP/MEP pathway for isoprenoid precursor biosynthesis. This Helicobacter hepaticus (strain ATCC 51449 / 3B1) protein is 4-hydroxy-3-methylbut-2-enyl diphosphate reductase.